Here is a 630-residue protein sequence, read N- to C-terminus: Differentially expressed in FDCP 6 (630 aa).

Residue Y210 is modified to Phosphotyrosine. One can recognise a PH domain in the interval 216–312; it reads DVLKQGYLWK…WTAAIQTAIR (97 aa). K225 bears the N6-acetyllysine mark. Disordered regions lie at residues 318 to 341, 378 to 418, and 552 to 630; these read KTSL…RRRA, LQEE…ELKK, and HPIE…APGN. 2 stretches are compositionally biased toward basic and acidic residues: residues 331 to 341 and 378 to 392; these read EQREQRERRRA and LQEE…HKEL. The segment covering 588–606 has biased composition (polar residues); sequence WGSQGNRTLSVNSSEQKSL. S590 is modified (phosphoserine). Residues 620-630 show a composition bias toward basic and acidic residues; it reads QEEKLDPAPGN.

As to quaternary structure, interacts with IRF4, activated RAC1 and F-actin. Both the phosphorylated and non-phosphorylated forms bind phosphatidylinositol 3,4,5-trisphosphate (PtdInsP3). Interacts with ZAP70. Interacts with RAB11A. In terms of processing, tyrosine-phosphorylated by tyrosine-protein kinase LCK in response to T-cell activation. Thymus.

Its subcellular location is the cytoplasm. It is found in the cell membrane. The protein resides in the nucleus. The protein localises to the cytoskeleton. It localises to the perinuclear region. Its subcellular location is the cell projection. It is found in the filopodium. Functionally, phosphatidylinositol 3,4,5-trisphosphate-dependent guanine nucleotide exchange factor (GEF) which plays a role in the activation of Rho GTPases RAC1, RhoA and CDC42. Can regulate cell morphology in cooperation with activated RAC1. Involved in immune homeostasis by ensuring proper trafficking and availability of T-cell regulator CTLA-4 at T-cell surface. Plays a role in Th2 (T helper cells) development and/or activation, perhaps by interfering with ZAP70 signaling. Required for optimal T-cell effector function, lymphocyte homeostasis and the prevention of systemic autoimmunity. In Mus musculus (Mouse), this protein is Differentially expressed in FDCP 6 (Def6).